A 219-amino-acid chain; its full sequence is Aspartic protease inhibitor 10 (219 aa).

Residues 1-23 (MMKCLFLLCLCLVPIVVFSSTFT) form the signal peptide. Positions 24–32 (SQNLIDLPS) are excised as a propeptide. A Vacuolar targeting signal motif is present at residues 26–31 (NLIDLP). N51 carries an N-linked (GlcNAc...) asparagine glycan. 2 disulfides stabilise this stretch: C80–C125 and C173–C184.

Belongs to the protease inhibitor I3 (leguminous Kunitz-type inhibitor) family. As to expression, in tubers and green buds of untreated plants. After abscisic acid treatment or mechanical wounding is mostly accumulated in leaves, to a lesser extent in stems, but not in roots.

In terms of biological role, inhibitor of cathepsin D (aspartic protease) and trypsin (serine protease). Protects the plant by inhibiting proteases of invading organisms. The chain is Aspartic protease inhibitor 10 (CDI) from Solanum tuberosum (Potato).